Reading from the N-terminus, the 85-residue chain is MAFKKKFTPKKKFCRFCANKNLPVDYKRPDILKDFITDRGKIIARRITGTCAKCQRRLTLEIKRARQMALLYYTATHSAEHLKKM.

Belongs to the bacterial ribosomal protein bS18 family. In terms of assembly, part of the 30S ribosomal subunit. Forms a tight heterodimer with protein bS6.

Its function is as follows. Binds as a heterodimer with protein bS6 to the central domain of the 16S rRNA, where it helps stabilize the platform of the 30S subunit. This Solidesulfovibrio magneticus (strain ATCC 700980 / DSM 13731 / RS-1) (Desulfovibrio magneticus) protein is Small ribosomal subunit protein bS18.